We begin with the raw amino-acid sequence, 70 residues long: Uteroglobin (70 aa).

It belongs to the secretoglobin family. In terms of assembly, antiparallel homodimer; disulfide-linked. Interaction with LMBR1L is controversial. In terms of tissue distribution, club cells (nonciliated cells of the surface epithelium of the pulmonary airways).

The protein localises to the secreted. Binds phosphatidylcholine, phosphatidylinositol, polychlorinated biphenyls (PCB) and weakly progesterone, potent inhibitor of phospholipase A2. The sequence is that of Uteroglobin (SCGB1A1) from Macaca fuscata fuscata (Japanese macaque).